The chain runs to 287 residues: tRNA pseudouridine synthase B (287 aa).

The active-site Nucleophile is the Asp-38.

This sequence belongs to the pseudouridine synthase TruB family. Type 1 subfamily.

The catalysed reaction is uridine(55) in tRNA = pseudouridine(55) in tRNA. In terms of biological role, responsible for synthesis of pseudouridine from uracil-55 in the psi GC loop of transfer RNAs. In Fusobacterium nucleatum subsp. nucleatum (strain ATCC 25586 / DSM 15643 / BCRC 10681 / CIP 101130 / JCM 8532 / KCTC 2640 / LMG 13131 / VPI 4355), this protein is tRNA pseudouridine synthase B.